The chain runs to 67 residues: DNA-directed RNA polymerase subunit omega (67 aa).

It belongs to the RNA polymerase subunit omega family. As to quaternary structure, the RNAP catalytic core consists of 2 alpha, 1 beta, 1 beta' and 1 omega subunit. When a sigma factor is associated with the core the holoenzyme is formed, which can initiate transcription.

The enzyme catalyses RNA(n) + a ribonucleoside 5'-triphosphate = RNA(n+1) + diphosphate. Functionally, promotes RNA polymerase assembly. Latches the N- and C-terminal regions of the beta' subunit thereby facilitating its interaction with the beta and alpha subunits. The sequence is that of DNA-directed RNA polymerase subunit omega from Burkholderia ambifaria (strain ATCC BAA-244 / DSM 16087 / CCUG 44356 / LMG 19182 / AMMD) (Burkholderia cepacia (strain AMMD)).